Consider the following 457-residue polypeptide: Vasoactive intestinal polypeptide receptor 1 (457 aa).

Residues 1-30 (MRPPSPLPARWLCVLAGALAWALGPAGGQA) form the signal peptide. The Extracellular segment spans residues 31–141 (ARLQEECDYV…DEQQTMFYGS (111 aa)). Disulfide bonds link Cys-37-Cys-208, Cys-50-Cys-72, Cys-63-Cys-105, Cys-86-Cys-122, and Cys-215-Cys-285. N-linked (GlcNAc...) asparagine glycosylation is found at Asn-58, Asn-69, and Asn-100. Residues 142 to 166 (VKTGYTIGYGLSLATLLVATAILSL) traverse the membrane as a helical segment. At 167–174 (FRKLHCTR) the chain is on the cytoplasmic side. The chain crosses the membrane as a helical span at residues 175–196 (NYIHMHLFISFILRAAAVFIKD). At 197-216 (LALFDSGESDQCSEGSVGCK) the chain is on the extracellular side. A helical transmembrane segment spans residues 217 to 241 (AAMVFFQYCVMANFFWLLVEGLYLY). Residues 242–254 (TLLAVSFFSERKY) lie on the Cytoplasmic side of the membrane. The chain crosses the membrane as a helical span at residues 255–276 (FWGYILIGWGVPSTFTMVWTIA). Topologically, residues 277-291 (RIHFEDYGCWDTINS) are extracellular. N-linked (GlcNAc...) asparagine glycosylation is present at Asn-290. The chain crosses the membrane as a helical span at residues 292 to 316 (SLWWIIKGPILTSILVNFILFICII). The Cytoplasmic portion of the chain corresponds to 317–338 (RILLQKLRPPDIRKSDSSPYSR). Residues 339–359 (LARSTLLLIPLFGVHYIMFAF) traverse the membrane as a helical segment. Residues 360–367 (FPDNFKPE) are Extracellular-facing. A helical transmembrane segment spans residues 368–391 (VKMVFELVVGSFQGFVVAILYCFL). At 392-457 (NGEVQAELRR…SSFQAEVSLV (66 aa)) the chain is on the cytoplasmic side.

Belongs to the G-protein coupled receptor 2 family. In terms of assembly, interacts with ADCYAP1/PACAP; activated by both PACAP27 and PACAP38 neuropeptides. Interacts with VIP; the interaction results in VIPR1 activation. In terms of tissue distribution, in lung, HT-29 colonic epithelial cells, Raji B-lymphoblasts. Lesser extent in brain, heart, kidney, liver and placenta. Not expressed in CD4+ or CD8+ T-cells. Expressed in the T-cell lines HARRIS, HuT 78, Jurkat and SUP-T1, but not in the T-cell lines Peer, MOLT-4, HSB and YT.

The protein localises to the cell membrane. Functionally, g protein-coupled receptor activated by the neuropeptides vasoactive intestinal peptide (VIP) and pituitary adenylate cyclase-activating polypeptide (ADCYAP1/PACAP). Binds VIP and both PACAP27 and PACAP38 bioactive peptides with the following order of ligand affinity VIP = PACAP27 &gt; PACAP38. Ligand binding causes a conformation change that triggers signaling via guanine nucleotide-binding proteins (G proteins) and modulates the activity of downstream effectors. Activates cAMP-dependent pathway. The chain is Vasoactive intestinal polypeptide receptor 1 from Homo sapiens (Human).